The sequence spans 321 residues: Probable 2-oxoglutarate-dependent dioxygenase AOP1.2 (321 aa).

The region spanning 165-270 (TYYLTRLMKY…RYSTGLFSIP (106 aa)) is the Fe2OG dioxygenase domain. Fe cation-binding residues include H194, D196, and H251. R261 lines the 2-oxoglutarate pocket.

The protein belongs to the iron/ascorbate-dependent oxidoreductase family. Fe(2+) serves as cofactor.

Its function is as follows. Probable 2-oxoglutarate-dependent dioxygenase that may be involved in glucosinolates biosynthesis. May play a role in the production of aliphatic glucosinolates. This chain is Probable 2-oxoglutarate-dependent dioxygenase AOP1.2 (AOP1.2), found in Arabidopsis thaliana (Mouse-ear cress).